We begin with the raw amino-acid sequence, 92 residues long: uncharacterized protein (92 aa).

A disordered region spans residues 25-53; sequence AGRGVRREARDTPCRGTAEGLATSQPEDG.

This is an uncharacterized protein from Treponema pallidum (strain Nichols).